A 102-amino-acid polypeptide reads, in one-letter code: uncharacterized protein (102 aa).

Residues 77-102 (RKDGDEKSKPNSKDYASRPIRDHSKI) are disordered.

This is an uncharacterized protein from Microplitis demolitor (Parasitoid wasp).